The sequence spans 460 residues: Retinoic acid receptor alpha (460 aa).

A modulating region spans residues 1-87 (MASNSSSCPT…PPPLPRIYKP (87 aa)). Positions 46–78 (HQLPVSGYSTPSPATVETQSTSSEEIVPSPPSP) are disordered. A compositionally biased stretch (polar residues) spans 52–69 (GYSTPSPATVETQSTSSE). NR C4-type zinc fingers lie at residues 88-108 (CFVC…CEGC) and 124-148 (CHRD…LQKC). The nuclear receptor DNA-binding region spans 88–153 (CFVCQDKSSG…RLQKCFEVGM (66 aa)). Positions 154 to 182 (SKESVRNDRNKKKKDVPKTECSESYIVTP) are hinge. In terms of domain architecture, NR LBD spans 183-417 (EVEELIEKVR…PLIQEMLENS (235 aa)). The short motif at 408–416 (PLIQEMLEN) is the 9aaTAD element. Positions 418–460 (EGMDTLGGQPGGPRTGGLGPPPGSCSPSLSPSSTRSSPATHSP) are disordered. Residues 425–435 (GQPGGPRTGGL) are compositionally biased toward gly residues. Residues 442–460 (CSPSLSPSSTRSSPATHSP) show a composition bias toward low complexity.

The protein belongs to the nuclear hormone receptor family. NR1 subfamily. In terms of assembly, heterodimer; with an RXR molecule. Binds DNA preferentially as a RAR/RXR heterodimer. Ubiquitous.

The protein resides in the nucleus. Its function is as follows. Receptor for retinoic acid. Retinoic acid receptors bind as heterodimers to their target response elements in response to their ligands, all-trans or 9-cis retinoic acid, and regulate gene expression in various biological processes. The RAR/RXR heterodimers bind to the retinoic acid response elements (RARE) composed of tandem 5'-AGGTCA-3' sites known as DR1-DR5. Required for hindbrain patterning and appears to be required for skin development. This Gallus gallus (Chicken) protein is Retinoic acid receptor alpha (RARA).